Reading from the N-terminus, the 61-residue chain is Putative antitoxin APE_0472b.1 (61 aa).

Belongs to the UPF0165 family.

In terms of biological role, possibly the antitoxin component of a type II toxin-antitoxin (TA) system. The chain is Putative antitoxin APE_0472b.1 from Aeropyrum pernix (strain ATCC 700893 / DSM 11879 / JCM 9820 / NBRC 100138 / K1).